A 60-amino-acid polypeptide reads, in one-letter code: Single-pass membrane and coiled-coil domain-containing protein 4 homolog (60 aa).

The segment at 1-22 (MRKLRGGQTRETRKQKQERREE) is disordered. Basic and acidic residues predominate over residues 8-22 (QTRETRKQKQERREE). Positions 8–34 (QTRETRKQKQERREENQKIQQQLKTIV) form a coiled coil. Residues 30–50 (LKTIVLPICGVVFLCIVAYVF) form a helical membrane-spanning segment.

Belongs to the SMCO4 family.

Its subcellular location is the membrane. The protein is Single-pass membrane and coiled-coil domain-containing protein 4 homolog of Culex quinquefasciatus (Southern house mosquito).